The primary structure comprises 373 residues: MPSVSAVILKLAAAALSALLLSGVAANATSRIKDLANIEGVRQNQLIGYGLVVGLNGTGDTLNNIPFTKQSLQAMLERMGVNIRGATIRTGNVAAVMVTGNLPAFATQGTRMDVTVSALGDAKNLQGGTLLVTPLLGADGNVYAVAQGSLAIGGFQAEGEAAKITRGVPTVGRIANGAIIEREIEFALNRLPMVRLALRNADFTTAKRIAAAVNDFLGTKSAEPIDPSTVQLTIPAEFKGNAVAFVTEIEQLQVEPDQAAKIIIDERSGIIVMGRDVRVATVAVAQGNLTVSISESPQVSQPNPLANGRTVVTPNSRIGVTEDGKKLALVKDGVSLQQLVDGLNGLGIGPRDLIGILQAIKAAGAIEADIEVM.

Positions 1–28 (MPSVSAVILKLAAAALSALLLSGVAANA) are cleaved as a signal peptide.

This sequence belongs to the FlgI family. In terms of assembly, the basal body constitutes a major portion of the flagellar organelle and consists of four rings (L,P,S, and M) mounted on a central rod.

It localises to the periplasm. Its subcellular location is the bacterial flagellum basal body. Its function is as follows. Assembles around the rod to form the L-ring and probably protects the motor/basal body from shearing forces during rotation. The sequence is that of Flagellar P-ring protein from Rhodopseudomonas palustris (strain HaA2).